A 178-amino-acid polypeptide reads, in one-letter code: ATP synthase subunit delta (178 aa).

Belongs to the ATPase delta chain family. In terms of assembly, F-type ATPases have 2 components, F(1) - the catalytic core - and F(0) - the membrane proton channel. F(1) has five subunits: alpha(3), beta(3), gamma(1), delta(1), epsilon(1). F(0) has three main subunits: a(1), b(2) and c(10-14). The alpha and beta chains form an alternating ring which encloses part of the gamma chain. F(1) is attached to F(0) by a central stalk formed by the gamma and epsilon chains, while a peripheral stalk is formed by the delta and b chains.

It localises to the cell inner membrane. Functionally, f(1)F(0) ATP synthase produces ATP from ADP in the presence of a proton or sodium gradient. F-type ATPases consist of two structural domains, F(1) containing the extramembraneous catalytic core and F(0) containing the membrane proton channel, linked together by a central stalk and a peripheral stalk. During catalysis, ATP synthesis in the catalytic domain of F(1) is coupled via a rotary mechanism of the central stalk subunits to proton translocation. In terms of biological role, this protein is part of the stalk that links CF(0) to CF(1). It either transmits conformational changes from CF(0) to CF(1) or is implicated in proton conduction. This is ATP synthase subunit delta from Methylococcus capsulatus (strain ATCC 33009 / NCIMB 11132 / Bath).